The following is a 554-amino-acid chain: MPTVDDILEQVGHFHFFQKQTFFLLALISAAFTPIYVGIVFLGFTPDHRCRSPGVAELSQRCGWSPGEELNYTVPGLGAADGAFARQCMRYEVDWNQSSPGCVDPLASLAPNRSHLPLGPCQHGWVYDTPGSSIVTEFNLVCARSWMLDLFQSAVNIGFFIGSVGIGYLADRFGRKLCLLVTILINAAAGVLMAVSPNYTWMLIFRLIQGLVSKAGWLIGYILITEFVGLNYRRTVGILYQVAFTVGLLVLAGVAYALPRWRWLQLTVTLPYFCFLLYYWCIPESPRWLISQNKNAKAMRIMEHIAKKNGKSLPVSLQSLRAAEDVGEKLNPSFLDLVRTPQIRKHTCILMYNWFTSSVLYQGLIMHLGLAGGDIYLDFFYSALVEFPAAFLIIATIDRVGRRYPWAVSNMVAGAACLASVFVPDDLQGLRITVACLGRMGITMAYEMVCLVNAELYPTFIRNLGVLVCSSLCDVGGIVTPFLVYRLTAIWLQLPLVVFAVVGLVAGGLVLMLPETKGRTLPETIEEAENLQRPRKNREKVIYVHVRKADGPLT.

The Cytoplasmic portion of the chain corresponds to 1-21 (MPTVDDILEQVGHFHFFQKQT). The chain crosses the membrane as a helical span at residues 22 to 42 (FFLLALISAAFTPIYVGIVFL). Residues 43–149 (GFTPDHRCRS…LVCARSWMLD (107 aa)) are Extracellular-facing. The N-linked (GlcNAc...) asparagine glycan is linked to Asn71. A helical membrane pass occupies residues 150–170 (LFQSAVNIGFFIGSVGIGYLA). Residues 171–176 (DRFGRK) are Cytoplasmic-facing. Residues 177-197 (LCLLVTILINAAAGVLMAVSP) traverse the membrane as a helical segment. The N-linked (GlcNAc...) asparagine glycan is linked to Asn198. The Extracellular segment spans residues 198 to 209 (NYTWMLIFRLIQ). Residues 210 to 230 (GLVSKAGWLIGYILITEFVGL) form a helical membrane-spanning segment. The Cytoplasmic segment spans residues 231–237 (NYRRTVG). The chain crosses the membrane as a helical span at residues 238-258 (ILYQVAFTVGLLVLAGVAYAL). The Extracellular portion of the chain corresponds to 259-262 (PRWR). Residues 263–283 (WLQLTVTLPYFCFLLYYWCIP) form a helical membrane-spanning segment. The short motif at 283-287 (PESPR) is the Proline-rich sequence element. Residues 284-348 (ESPRWLISQN…RTPQIRKHTC (65 aa)) are Cytoplasmic-facing. Residues 349-369 (ILMYNWFTSSVLYQGLIMHLG) traverse the membrane as a helical segment. The Extracellular segment spans residues 370-374 (LAGGD). Residues 375-395 (IYLDFFYSALVEFPAAFLIIA) traverse the membrane as a helical segment. The Cytoplasmic segment spans residues 396–403 (TIDRVGRR). A helical membrane pass occupies residues 404–424 (YPWAVSNMVAGAACLASVFVP). Residues 425 to 427 (DDL) lie on the Extracellular side of the membrane. The helical transmembrane segment at 428–450 (QGLRITVACLGRMGITMAYEMVC) threads the bilayer. The Cytoplasmic segment spans residues 451–463 (LVNAELYPTFIRN). Residues 464-484 (LGVLVCSSLCDVGGIVTPFLV) traverse the membrane as a helical segment. Residues 485 to 493 (YRLTAIWLQ) lie on the Extracellular side of the membrane. Residues 494–514 (LPLVVFAVVGLVAGGLVLMLP) traverse the membrane as a helical segment. Topologically, residues 515-554 (ETKGRTLPETIEEAENLQRPRKNREKVIYVHVRKADGPLT) are cytoplasmic.

The protein belongs to the major facilitator (TC 2.A.1) superfamily. Organic cation transporter (TC 2.A.1.19) family. Post-translationally, tyrosine phosphorylated. In terms of tissue distribution, expressed in kidney.

It is found in the basolateral cell membrane. It localises to the basal cell membrane. It carries out the reaction (R)-noradrenaline(out) = (R)-noradrenaline(in). The enzyme catalyses (R)-adrenaline(out) = (R)-adrenaline(in). The catalysed reaction is serotonin(out) = serotonin(in). It catalyses the reaction dopamine(out) = dopamine(in). It carries out the reaction histamine(out) = histamine(in). The enzyme catalyses thiamine(in) = thiamine(out). The catalysed reaction is creatinine(in) = creatinine(out). It catalyses the reaction 1-methylnicotinamide(out) = 1-methylnicotinamide(in). It carries out the reaction guanidine(out) = guanidine(in). The enzyme catalyses choline(out) = choline(in). The catalysed reaction is agmatine(out) = agmatine(in). It catalyses the reaction putrescine(out) = putrescine(in). It carries out the reaction spermidine(in) = spermidine(out). The enzyme catalyses tyramine(in) = tyramine(out). The catalysed reaction is L-histidyl-L-proline diketopiperazine(in) = L-histidyl-L-proline diketopiperazine(out). It catalyses the reaction (R)-salsolinol(in) = (R)-salsolinol(out). It carries out the reaction N-methyl-(R)-salsolinol(in) = N-methyl-(R)-salsolinol(out). The enzyme catalyses acetylcholine(in) = acetylcholine(out). The catalysed reaction is prostaglandin F2alpha(out) = prostaglandin F2alpha(in). It catalyses the reaction prostaglandin E2(out) = prostaglandin E2(in). Its activity is regulated as follows. Tyrosine phosphorylation of the transporter leads to activation of the transport activity. Inhibited by cGMP, most likely through a cGMP-binding protein that interacts with OCT2. In terms of biological role, electrogenic voltage-dependent transporter that mediates the transport of a variety of organic cations such as endogenous bioactive amines, cationic drugs and xenobiotics. Functions as a Na(+)-independent, bidirectional uniporter. Cation cellular uptake or release is driven by the electrochemical potential, i.e. membrane potential and concentration gradient. However, may also engage electroneutral cation exchange when saturating concentrations of cation substrates are reached. Predominantly expressed at the basolateral membrane of hepatocytes and proximal tubules and involved in the uptake and disposition of cationic compounds by hepatic and renal clearance from the blood flow. Implicated in monoamine neurotransmitters uptake such as histamine, dopamine, adrenaline/epinephrine, noradrenaline/norepinephrine, serotonin and tyramine, thereby supporting a physiological role in the central nervous system by regulating interstitial concentrations of neurotransmitters. Also capable of transporting dopaminergic neuromodulators cyclo(his-pro), salsolinol and N-methyl-salsolinol, thereby involved in the maintenance of dopaminergic cell integrity in the central nervous system. Mediates the bidirectional transport of acetylcholine (ACh) at the apical membrane of ciliated cell in airway epithelium, thereby playing a role in luminal release of ACh from bronchial epithelium. Also transports guanidine and endogenous monoamines such as vitamin B1/thiamine, creatinine and N-1-methylnicotinamide (NMN). Mediates the uptake and efflux of quaternary ammonium compound choline. Mediates the bidirectional transport of polyamine agmatine and the uptake of polyamines putrescine and spermidine. Able to transport non-amine endogenous compounds such as prostaglandin E2 (PGE2) and prostaglandin F2-alpha (PGF2-alpha). Also involved in the uptake of xenobiotic 4-(4-(dimethylamino)styryl)-N-methylpyridinium (ASP). May contribute to regulate the transport of organic compounds in testis across the blood-testis-barrier. The chain is Solute carrier family 22 member 2 (SLC22A2) from Oryctolagus cuniculus (Rabbit).